The primary structure comprises 415 residues: ER-derived vesicles protein ERV46 (415 aa).

The Cytoplasmic portion of the chain corresponds to 1–24; it reads MKRSTLLSLDAFAKTEEDVRVRTR. The chain crosses the membrane as a helical span at residues 25–45; the sequence is AGGLITLSCILTTLFLLVNEW. Residues 46–376 are Lumenal-facing; that stretch reads GQFNSVVTRP…VINKEQHGQT (331 aa). Residues 377–397 traverse the membrane as a helical segment; sequence WSGFILNCITSIGGVLAVGTV. Topologically, residues 398 to 415 are cytoplasmic; the sequence is MDKLFYKAQRSIWGKKSQ. The Phenylalanine-tyrosine motif signature appears at 402 to 403; that stretch reads FY.

It belongs to the ERGIC family. As to quaternary structure, interacts with ERV41.

The protein localises to the endoplasmic reticulum membrane. It localises to the golgi apparatus membrane. Constituent of COPII-coated endoplasmic reticulum-derived transport vesicles. Required for efficient transport of a subset of secretory proteins to the Golgi. The C-terminal Phe-Tyr motif is required for exit from the endoplasmic reticulum. Facilitates retrograde transport from the Golgi to the endoplasmic reticulum. This Saccharomyces cerevisiae (strain ATCC 204508 / S288c) (Baker's yeast) protein is ER-derived vesicles protein ERV46 (ERV46).